An 858-amino-acid chain; its full sequence is MFRLFSSGVDDLVLVSNPSNGEVTSQIGARFDRELIYTNIGEVLIAVNPYKALPITGPEFIKLYQNASGSDASPHIYALAERAYRRMVDENESQCVIISGESGAGKTVSAKLILQYVTSVSPNNSSGGGIGGSGGGNGGIPQYDGGSDDRPSPPMGRGMGMPGMVGRGGLPTRGGGPPSRGGGPPPTRGRGGPPPPIPQNRGAPPPVSNGGAPPPVARGPVAPPPTRGAPPTRGGGPANRGGRGGGPPPVSTSRGGGGYGGSSKTVDVEHIKKVILDSNPLMEAIGNAKTVRNDNSSRFGKYLEIQFDDNNAPVGGLISTFLLEKTRVTFQQKNERNFHIFYQMLGGLDQTTKSEWGLTQATDFYYLAQSKCTTVEDVDDGKDFHEVKAAMETVGISRDEQTEIFRILAAILHVGNIRFQGEAPASVIDETPLQWAASLLGCDPTFLCQSLNHRQIQSGSARHTQYQVPQNPDQSAGLRDALAKTLYERIFDFIVARVNKAMSFSGNCKVIGVLDIYGFEVFERNSFEQFCINYVNERLQQIFIDLTVRGEQREYHEEGMKWKDISFFDNKIVVDLIDGNKPPGIMRVLDDVCKTVHAVDSAAADIKFMEKLIHSIQSHPHLVISNTGSSADEFTIKHYAGEVSYSIEEFCFKNNDNLYASIVGCLQNSTYQFIVSLFPENIQDNKQAPTTSSFKIRQSSSYLVTRLSACTPHYIRCIKPNDKKQPMNFVSSRVEHQVKYLGILENIKVKRSGYAYRQLKDIFLNRFGKIMDVQPRNVQEFVEYITRTHKDINADEFEEGKTKIFVKNPETIFVMEDLLMQKIDPIGYKNRVQAYKENEKLAQMKQGKHSMKQKCLIQ.

One can recognise a Myosin motor domain in the interval 7–820; it reads SGVDDLVLVS…TIFVMEDLLM (814 aa). 100–107 provides a ligand contact to ATP; the sequence is GESGAGKT. The disordered stretch occupies residues 121-265; the sequence is SPNNSSGGGI…GGGYGGSSKT (145 aa). 2 stretches are compositionally biased toward gly residues: residues 126 to 139 and 157 to 182; these read SGGG…GNGG and RGMG…SRGG. Positions 183-228 are enriched in pro residues; that stretch reads GPPPTRGRGGPPPPIPQNRGAPPPVSNGGAPPPVARGPVAPPPTRG. Positions 233-245 are enriched in gly residues; it reads RGGGPANRGGRGG. Residues 712–722 form an actin-binding region; sequence PHYIRCIKPND. The tail stretch occupies residues 821 to 858; that stretch reads QKIDPIGYKNRVQAYKENEKLAQMKQGKHSMKQKCLIQ.

This sequence belongs to the TRAFAC class myosin-kinesin ATPase superfamily. Myosin family.

Its subcellular location is the cytoplasm. Myosins are actin-based motor molecules with ATPase activity. Involved in phagocytosis and motility, and in the maintenance and dynamics of cell cortex. The protein is Myosin-K heavy chain (myoK) of Dictyostelium discoideum (Social amoeba).